The following is an 86-amino-acid chain: Small ribosomal subunit protein bS20 (86 aa).

Belongs to the bacterial ribosomal protein bS20 family.

Binds directly to 16S ribosomal RNA. This is Small ribosomal subunit protein bS20 from Bifidobacterium longum (strain DJO10A).